The sequence spans 77 residues: MAENKQNLQDAFLNHVRKTKVPVTIFLINGVKLQGVITWFDNFCVLLRRDGQSQLVYKHAISTVMPAQPISLYDGEE.

Residues 10-70 (DAFLNHVRKT…ISTVMPAQPI (61 aa)) enclose the Sm domain.

Belongs to the Hfq family. Homohexamer.

Functionally, RNA chaperone that binds small regulatory RNA (sRNAs) and mRNAs to facilitate mRNA translational regulation in response to envelope stress, environmental stress and changes in metabolite concentrations. Also binds with high specificity to tRNAs. The protein is RNA-binding protein Hfq of Jannaschia sp. (strain CCS1).